The chain runs to 301 residues: ATP synthase gamma chain (301 aa).

It belongs to the ATPase gamma chain family. As to quaternary structure, F-type ATPases have 2 components, CF(1) - the catalytic core - and CF(0) - the membrane proton channel. CF(1) has five subunits: alpha(3), beta(3), gamma(1), delta(1), epsilon(1). CF(0) has three main subunits: a, b and c.

It is found in the cell inner membrane. Functionally, produces ATP from ADP in the presence of a proton gradient across the membrane. The gamma chain is believed to be important in regulating ATPase activity and the flow of protons through the CF(0) complex. The sequence is that of ATP synthase gamma chain from Bordetella pertussis (strain Tohama I / ATCC BAA-589 / NCTC 13251).